A 757-amino-acid polypeptide reads, in one-letter code: RNA-directed RNA polymerase catalytic subunit (757 aa).

The tract at residues 52–82 (RGKWTTNTETGAPQLNPIDGPLPEDNEPSGY) is disordered. The span at 55–64 (WTTNTETGAP) shows a compositional bias: polar residues. Short sequence motifs (nuclear localization signal) lie at residues 187–195 (RKRRVRDNM) and 203–216 (RTIG…NKRS). The interval 249–256 (RGFVYFVE) is promoter-binding site. Residues 286-483 (VRKMMTNSQD…GINMSKKKSY (198 aa)) form the RdRp catalytic domain.

Belongs to the influenza viruses polymerase PB1 family. As to quaternary structure, influenza RNA polymerase is composed of three subunits: PB1, PB2 and PA. Interacts (via N-terminus) with PA (via C-terminus). Interacts (via C-terminus) with PB2 (via N-terminus); this interaction is essential for transcription initiation. In terms of processing, phosphorylated by host PRKCA.

Its subcellular location is the host nucleus. It is found in the host cytoplasm. The catalysed reaction is RNA(n) + a ribonucleoside 5'-triphosphate = RNA(n+1) + diphosphate. Functionally, RNA-dependent RNA polymerase which is responsible for replication and transcription of virus RNA segments. The transcription of viral mRNAs occurs by a unique mechanism called cap-snatching. 5' methylated caps of cellular mRNAs are cleaved after 10-13 nucleotides by PA. In turn, these short capped RNAs are used as primers by PB1 for transcription of viral mRNAs. During virus replication, PB1 initiates RNA synthesis and copy vRNA into complementary RNA (cRNA) which in turn serves as a template for the production of more vRNAs. The polypeptide is RNA-directed RNA polymerase catalytic subunit (Aves).